Here is a 583-residue protein sequence, read N- to C-terminus: Sensor protein SrrB (583 aa).

Residues M1 to K11 lie on the Cytoplasmic side of the membrane. The chain crosses the membrane as a helical span at residues L12 to I32. Topologically, residues T33–T174 are extracellular. The helical transmembrane segment at I175 to L195 threads the bilayer. The Cytoplasmic portion of the chain corresponds to S196–E583. The 53-residue stretch at S197–D249 folds into the HAMP domain. The Histidine kinase domain occupies N366–E583. At H369 the chain carries Phosphohistidine; by autocatalysis.

It is found in the cell membrane. It catalyses the reaction ATP + protein L-histidine = ADP + protein N-phospho-L-histidine.. Member of the two-component regulatory system SrrA/SrrB, which is involved in the global regulation of staphylococcal virulence factors in response to environmental oxygen levels as well as biofilm formation. Also plays an essential role in host-derived nitric oxide resistance by regulating hmp/flavohemoglobin, an enzyme that detoxifies nitric oxide by converting it to nitrate. Functions as a sensor protein kinase which is autophosphorylated at a histidine residue and transfers its phosphate group to SrrA. In turn, SrrA binds to the upstream promoter regions of the target genes to positively and negatively regulate their expression. This chain is Sensor protein SrrB (srrB), found in Staphylococcus aureus (strain Mu50 / ATCC 700699).